Here is a 216-residue protein sequence, read N- to C-terminus: V-type ATP synthase subunit D (216 aa).

The protein belongs to the V-ATPase D subunit family.

Produces ATP from ADP in the presence of a proton gradient across the membrane. The protein is V-type ATP synthase subunit D of Clostridium botulinum (strain Loch Maree / Type A3).